A 207-amino-acid chain; its full sequence is Large ribosomal subunit protein bL25 (207 aa).

It belongs to the bacterial ribosomal protein bL25 family. CTC subfamily. Part of the 50S ribosomal subunit; part of the 5S rRNA/L5/L18/L25 subcomplex. Contacts the 5S rRNA. Binds to the 5S rRNA independently of L5 and L18.

This is one of the proteins that binds to the 5S RNA in the ribosome where it forms part of the central protuberance. The sequence is that of Large ribosomal subunit protein bL25 from Brucella canis (strain ATCC 23365 / NCTC 10854 / RM-666).